The sequence spans 117 residues: Large ribosomal subunit protein uL22 (117 aa).

It belongs to the universal ribosomal protein uL22 family. Part of the 50S ribosomal subunit.

In terms of biological role, this protein binds specifically to 23S rRNA; its binding is stimulated by other ribosomal proteins, e.g. L4, L17, and L20. It is important during the early stages of 50S assembly. It makes multiple contacts with different domains of the 23S rRNA in the assembled 50S subunit and ribosome. Functionally, the globular domain of the protein is located near the polypeptide exit tunnel on the outside of the subunit, while an extended beta-hairpin is found that lines the wall of the exit tunnel in the center of the 70S ribosome. This is Large ribosomal subunit protein uL22 from Chlorobium phaeobacteroides (strain BS1).